The primary structure comprises 214 residues: Large ribosomal subunit protein uL16 (214 aa).

Arg-32 carries the post-translational modification Citrulline. A Glycyl lysine isopeptide (Lys-Gly) (interchain with G-Cter in SUMO2) cross-link involves residue Lys-175. Residue Lys-188 forms a Glycyl lysine isopeptide (Lys-Gly) (interchain with G-Cter in ubiquitin) linkage.

The protein belongs to the universal ribosomal protein uL16 family. Component of the large ribosomal subunit. Mature ribosomes consist of a small (40S) and a large (60S) subunit. The 40S subunit contains about 33 different proteins and 1 molecule of RNA (18S). The 60S subunit contains about 49 different proteins and 3 molecules of RNA (28S, 5.8S and 5S). In terms of processing, citrullinated by PADI4. Ufmylated by UFL1.

It is found in the cytoplasm. In terms of biological role, component of the large ribosomal subunit. Plays a role in the formation of actively translating ribosomes. May play a role in the embryonic brain development. In Bos taurus (Bovine), this protein is Large ribosomal subunit protein uL16.